The following is a 159-amino-acid chain: Phospholipase A2 AP-PLA2-I (159 aa).

The N-terminal stretch at Met-1–Ala-19 is a signal peptide. Residues Gly-20–Gln-23 constitute a propeptide that is removed on maturation. Disulfide bonds link Cys-51–Cys-159, Cys-53–Cys-69, Cys-68–Cys-139, Cys-75–Cys-132, Cys-85–Cys-125, and Cys-110–Cys-130. Ca(2+) contacts are provided by Tyr-52, Gly-54, and Gly-56. His-72 is an active-site residue. Ca(2+) is bound at residue Asp-73. Residue Asp-133 is part of the active site.

Belongs to the phospholipase A2 family. Group I subfamily. As to quaternary structure, homodimer. The cofactor is Ca(2+). As to expression, expressed by the venom gland.

Its subcellular location is the secreted. It catalyses the reaction a 1,2-diacyl-sn-glycero-3-phosphocholine + H2O = a 1-acyl-sn-glycero-3-phosphocholine + a fatty acid + H(+). Starfish phospholipase A2 (PLA2) that has hemorrhagic and capillary permeability-increasing activities and hence is considered to be deeply involved in the local inflammation. Shows hemolytic activity only in the presence of phosphatidylcholine (PC). PLA2 catalyzes the calcium-dependent hydrolysis of the 2-acyl groups in 3-sn-phosphoglycerides. This is Phospholipase A2 AP-PLA2-I from Acanthaster planci (Crown-of-thorns starfish).